The chain runs to 297 residues: 3-mercaptopyruvate sulfurtransferase (297 aa).

Ala2 carries the post-translational modification N-acetylalanine. The region spanning 25–144 is the Rhodanese 1 domain; that stretch reads ASQPLKLLDA…WLSQNLPISS (120 aa). Ser35 is subject to Phosphoserine. An N6-acetyllysine; alternate modification is found at Lys40. Position 40 is an N6-succinyllysine; alternate (Lys40). The interval 145 to 160 is hinge; that stretch reads GKSPSEPAEFCAQLDP. N6-succinyllysine occurs at positions 146 and 164. Residues 174 to 288 enclose the Rhodanese 2 domain; sequence DARRFQVVDA…WYMRAQPEHV (115 aa). Residue Arg188 coordinates substrate. Catalysis depends on Cys248, which acts as the Cysteine persulfide intermediate.

In terms of assembly, monomer (active form). Homodimer; disulfide-linked (inactive form). The N-terminus is blocked. Expressed in liver, heart, kidney and brain. Localizes to tubular epithelium in the kidney, pericentral hepatocytes in the liver, cardiac cells in the heart and neuroglial cells in the brain. Also expressed in vascular endothelium of the thoracic aorta. Weak expression in lung and thymus.

Its subcellular location is the cytoplasm. It is found in the mitochondrion. It localises to the synapse. The protein resides in the synaptosome. The catalysed reaction is 2-oxo-3-sulfanylpropanoate + [thioredoxin]-dithiol = [thioredoxin]-disulfide + hydrogen sulfide + pyruvate + H(+). With respect to regulation, by oxidative stress, and thioredoxin. Under oxidative stress conditions, the catalytic cysteine site is converted to a sulfenate which inhibits the MPST enzyme activity. Reduced thioredoxin cleaves an intersubunit disulfide bond to turn on the redox switch and reactivate the enzyme. Inhibited by different oxidants, hydrogen peroxide and tetrathionate. Transfer of a sulfur ion to cyanide or to other thiol compounds. Also has weak rhodanese activity. Detoxifies cyanide and is required for thiosulfate biosynthesis. Acts as an antioxidant. In combination with cysteine aminotransferase (CAT), contributes to the catabolism of cysteine and is an important producer of hydrogen sulfide in the brain, retina and vascular endothelial cells. Hydrogen sulfide H(2)S is an important synaptic modulator, signaling molecule, smooth muscle contractor and neuroprotectant. Its production by the 3MST/CAT pathway is regulated by calcium ions. The protein is 3-mercaptopyruvate sulfurtransferase (Mpst) of Rattus norvegicus (Rat).